The primary structure comprises 100 residues: Integration host factor subunit beta (100 aa).

The segment at 81–100 (KPGKELRDRVNEDEHEEAHT) is disordered. Basic and acidic residues predominate over residues 82 to 100 (PGKELRDRVNEDEHEEAHT).

It belongs to the bacterial histone-like protein family. Heterodimer of an alpha and a beta chain.

Functionally, this protein is one of the two subunits of integration host factor, a specific DNA-binding protein that functions in genetic recombination as well as in transcriptional and translational control. In Pseudomonas putida (Arthrobacter siderocapsulatus), this protein is Integration host factor subunit beta (ihfB).